The sequence spans 383 residues: Acyl-CoA dehydrogenase, short-chain specific (383 aa).

The active-site Proton acceptor is Glu-367.

Belongs to the acyl-CoA dehydrogenase family. As to quaternary structure, homotetramer. Requires FAD as cofactor.

The catalysed reaction is butanoyl-CoA + oxidized [electron-transfer flavoprotein] + H(+) = (2E)-butenoyl-CoA + reduced [electron-transfer flavoprotein]. It catalyses the reaction a short-chain 2,3-saturated fatty acyl-CoA + oxidized [electron-transfer flavoprotein] + H(+) = a short-chain (2E)-enoyl-CoA + reduced [electron-transfer flavoprotein]. Functionally, has an optimum specificity for 4-carbon length fatty acyl-CoAs. This chain is Acyl-CoA dehydrogenase, short-chain specific, found in Megasphaera elsdenii.